Consider the following 109-residue polypeptide: A-type ATP synthase subunit F (109 aa).

This sequence belongs to the V-ATPase F subunit family. Has multiple subunits with at least A(3), B(3), C, D, E, F, H, I and proteolipid K(x).

It localises to the cell membrane. In terms of biological role, component of the A-type ATP synthase that produces ATP from ADP in the presence of a proton gradient across the membrane. This chain is A-type ATP synthase subunit F, found in Halorubrum lacusprofundi (strain ATCC 49239 / DSM 5036 / JCM 8891 / ACAM 34).